The sequence spans 194 residues: ATP-dependent Clp protease proteolytic subunit 1 (194 aa).

The active-site Nucleophile is serine 99. Residue histidine 124 is part of the active site.

This sequence belongs to the peptidase S14 family. In terms of assembly, fourteen ClpP subunits assemble into 2 heptameric rings which stack back to back to give a disk-like structure with a central cavity, resembling the structure of eukaryotic proteasomes.

The protein localises to the cytoplasm. It catalyses the reaction Hydrolysis of proteins to small peptides in the presence of ATP and magnesium. alpha-casein is the usual test substrate. In the absence of ATP, only oligopeptides shorter than five residues are hydrolyzed (such as succinyl-Leu-Tyr-|-NHMec, and Leu-Tyr-Leu-|-Tyr-Trp, in which cleavage of the -Tyr-|-Leu- and -Tyr-|-Trp bonds also occurs).. Cleaves peptides in various proteins in a process that requires ATP hydrolysis. Has a chymotrypsin-like activity. Plays a major role in the degradation of misfolded proteins. The polypeptide is ATP-dependent Clp protease proteolytic subunit 1 (Borreliella burgdorferi (strain ATCC 35210 / DSM 4680 / CIP 102532 / B31) (Borrelia burgdorferi)).